The chain runs to 293 residues: Homoserine kinase (293 aa).

Residue 84–94 (PLSRGLGSSSA) coordinates ATP.

This sequence belongs to the GHMP kinase family. Homoserine kinase subfamily.

It localises to the cytoplasm. The catalysed reaction is L-homoserine + ATP = O-phospho-L-homoserine + ADP + H(+). Its pathway is amino-acid biosynthesis; L-threonine biosynthesis; L-threonine from L-aspartate: step 4/5. Its function is as follows. Catalyzes the ATP-dependent phosphorylation of L-homoserine to L-homoserine phosphate. The polypeptide is Homoserine kinase (Nitratiruptor sp. (strain SB155-2)).